The sequence spans 365 residues: L-lactate oxidase (365 aa).

The FMN hydroxy acid dehydrogenase domain maps to 2–365 (TAISSPINLF…QDIDTSFLHL (364 aa)). Pyruvate is bound at residue tyrosine 28. Residues 81–83 (PMA), serine 110, and glutamine 135 each bind FMN. Tyrosine 137 is a pyruvate binding site. Threonine 163 is a binding site for FMN. Arginine 172 serves as a coordination point for pyruvate. Positions 239 and 261 each coordinate FMN. Residues histidine 263 and arginine 266 each coordinate pyruvate. Histidine 263 serves as the catalytic Proton acceptor. FMN is bound by residues 294-298 (DGGIR) and arginine 318.

This sequence belongs to the FMN-dependent alpha-hydroxy acid dehydrogenase family. Homotetramer. The cofactor is FMN.

The enzyme catalyses (S)-lactate + O2 = pyruvate + H2O2. The catalysed reaction is glyoxylate + O2 + H2O = oxalate + H2O2 + H(+). Catalyzes the oxidation of (S)-lactate (L-lactate) to pyruvate, with a reduction of O2 to H2O2. In extant N2-fixing cyanobacteria such as Nostoc, this enzyme primarily serves as an O2-scavenging enzyme, protecting nitrogenase that is extremely sensitive to O2, and is therefore an essential partner in N2 fixation. Also shows clear oxidase activity with glyoxylate in vitro, and low activity with glycerate, hydroxypyruvate and glycolate. The very low glycolate oxidase activity indicates that this enzyme is unlikely to be involved in photorespiratory glycolate metabolism, a pathway that seems to exist in this cyanobacterium, but in which the oxidation of glycolate is taken over by glycolate dehydrogenase (GlcD). Is not able to use D-lactate as substrate and does not show any dehydrogenase activity with NAD(+) or NADP(+). The polypeptide is L-lactate oxidase (Nostoc sp. (strain PCC 7120 / SAG 25.82 / UTEX 2576)).